Here is a 234-residue protein sequence, read N- to C-terminus: Probable transcriptional regulatory protein MYCGA1330 (234 aa).

This sequence belongs to the TACO1 family.

Its subcellular location is the cytoplasm. The polypeptide is Probable transcriptional regulatory protein MYCGA1330 (Mycoplasmoides gallisepticum (strain R(low / passage 15 / clone 2)) (Mycoplasma gallisepticum)).